The sequence spans 227 residues: Germin-like protein subfamily 3 member 2 (227 aa).

The signal sequence occupies residues 1-24; that stretch reads MEANTLFLLKALCLLCFNVCFTLA. Cys34 and Cys54 are joined by a disulfide. 2 N-linked (GlcNAc...) asparagine glycosylation sites follow: Asn56 and Asn75. Residues 68 to 213 form the Cupin type-1 domain; the sequence is SGLKTAGNFT…AFGLSLKQIG (146 aa). Residues His115, His117, Glu122, and His161 each contribute to the Mn(2+) site.

It belongs to the germin family. Oligomer (believed to be a pentamer but probably hexamer).

The protein resides in the secreted. The protein localises to the extracellular space. Its subcellular location is the apoplast. In terms of biological role, may play a role in plant defense. Probably has no oxalate oxidase activity even if the active site is conserved. The protein is Germin-like protein subfamily 3 member 2 of Arabidopsis thaliana (Mouse-ear cress).